The primary structure comprises 248 residues: 1-(5-phosphoribosyl)-5-[(5-phosphoribosylamino)methylideneamino] imidazole-4-carboxamide isomerase (248 aa).

Residue D11 is the Proton acceptor of the active site. Residue D132 is the Proton donor of the active site.

This sequence belongs to the HisA/HisF family.

Its subcellular location is the cytoplasm. It catalyses the reaction 1-(5-phospho-beta-D-ribosyl)-5-[(5-phospho-beta-D-ribosylamino)methylideneamino]imidazole-4-carboxamide = 5-[(5-phospho-1-deoxy-D-ribulos-1-ylimino)methylamino]-1-(5-phospho-beta-D-ribosyl)imidazole-4-carboxamide. It functions in the pathway amino-acid biosynthesis; L-histidine biosynthesis; L-histidine from 5-phospho-alpha-D-ribose 1-diphosphate: step 4/9. This is 1-(5-phosphoribosyl)-5-[(5-phosphoribosylamino)methylideneamino] imidazole-4-carboxamide isomerase from Afipia carboxidovorans (strain ATCC 49405 / DSM 1227 / KCTC 32145 / OM5) (Oligotropha carboxidovorans).